Reading from the N-terminus, the 193-residue chain is CASP-like protein 2D1 (193 aa).

The segment at Met1–Ala24 is disordered. At Met1–Lys29 the chain is on the cytoplasmic side. The chain crosses the membrane as a helical span at residues Ile30–Thr50. Residues Val51–Tyr73 are Extracellular-facing. A helical membrane pass occupies residues Met74 to Val94. Residues Thr95 to Gln109 are Cytoplasmic-facing. A helical transmembrane segment spans residues Val110 to Gly132. At Asp133–Lys151 the chain is on the extracellular side. The helical transmembrane segment at Leu152 to Ile172 threads the bilayer. Residues Ser173 to Ala193 are Cytoplasmic-facing.

Belongs to the Casparian strip membrane proteins (CASP) family. In terms of assembly, homodimer and heterodimers.

The protein resides in the cell membrane. The sequence is that of CASP-like protein 2D1 from Arabidopsis lyrata subsp. lyrata (Lyre-leaved rock-cress).